The sequence spans 492 residues: Adenosylhomocysteinase (492 aa).

Substrate is bound by residues Thr-68, Asp-153, and Glu-215. 216 to 218 (TTT) provides a ligand contact to NAD(+). The substrate site is built by Lys-245 and Asp-249. Residues Asn-250, 279-284 (GYGDVG), Glu-302, Asn-337, 358-360 (IGH), and Asn-406 contribute to the NAD(+) site.

It belongs to the adenosylhomocysteinase family. NAD(+) serves as cofactor.

It is found in the cytoplasm. The catalysed reaction is S-adenosyl-L-homocysteine + H2O = L-homocysteine + adenosine. The protein operates within amino-acid biosynthesis; L-homocysteine biosynthesis; L-homocysteine from S-adenosyl-L-homocysteine: step 1/1. Its function is as follows. May play a key role in the regulation of the intracellular concentration of adenosylhomocysteine. This chain is Adenosylhomocysteinase, found in Mycobacterium ulcerans (strain Agy99).